The primary structure comprises 506 residues: Ribose import ATP-binding protein RbsA (506 aa).

2 consecutive ABC transporter domains span residues 5-237 (VQLI…VGRP) and 249-492 (PFGA…LAIE). Position 37–44 (37–44 (GENGAGKS)) interacts with ATP.

This sequence belongs to the ABC transporter superfamily. Ribose importer (TC 3.A.1.2.1) family. In terms of assembly, the complex is composed of an ATP-binding protein (RbsA), two transmembrane proteins (RbsC) and a solute-binding protein (RbsB).

It is found in the cell inner membrane. The catalysed reaction is D-ribose(out) + ATP + H2O = D-ribose(in) + ADP + phosphate + H(+). Functionally, part of the ABC transporter complex RbsABC involved in ribose import. Responsible for energy coupling to the transport system. The chain is Ribose import ATP-binding protein RbsA from Chelativorans sp. (strain BNC1).